The following is a 391-amino-acid chain: Ethanol acetyltransferase 1 (391 aa).

A mitochondrion-targeting transit peptide spans 1-24 (MFFTKVLNNQVANGLKQLPVHKRV). An AB hydrolase-1 domain is found at 48-154 (PIVFVHGIFG…DNSPIEQPHI (107 aa)). Catalysis depends on charge relay system residues Ser-121, Asp-145, and His-295.

This sequence belongs to the AB hydrolase superfamily.

It localises to the mitochondrion. The catalysed reaction is ethanol + acetyl-CoA = ethyl acetate + CoA. It carries out the reaction acetyl-CoA + H2O = acetate + CoA + H(+). The enzyme catalyses ethyl acetate + H2O = ethanol + acetate + H(+). Its activity is regulated as follows. By ethanol. Thioesterase and esterase reactions are highly repressed in the presence of high ethanol concentrations. In terms of biological role, alcohol acetyltransferase that catalyzes the synthesis of ethyl acetate from ethanol and acetyl-CoA. Can also function as a thioesterase by hydrolyzing acetyl-CoA in the absence of ethanol, as well as esterase hydrolyzing ethyl acetate. In Wickerhamomyces anomalus (strain ATCC 58044 / CBS 1984 / NCYC 433 / NRRL Y-366-8) (Yeast), this protein is Ethanol acetyltransferase 1 (EAT1).